Consider the following 132-residue polypeptide: Small ribosomal subunit protein uS8 (132 aa).

The protein belongs to the universal ribosomal protein uS8 family. As to quaternary structure, part of the 30S ribosomal subunit. Contacts proteins S5 and S12.

Functionally, one of the primary rRNA binding proteins, it binds directly to 16S rRNA central domain where it helps coordinate assembly of the platform of the 30S subunit. In Lactococcus lactis subsp. lactis (strain IL1403) (Streptococcus lactis), this protein is Small ribosomal subunit protein uS8.